A 265-amino-acid polypeptide reads, in one-letter code: MKAYLDLMRHVLDNGTDKSDRTGTGTLSVFGYQMRFDLGKGFPLLTTKKLHLRSIIHELLWFLKGDTNIKYLKDNNVSIWDDEWADENGDLGPVYGYQWRSWPAPDGRHIDQIANVVEQIKKNPDSRRLIVSAWNPALVDEMALPPCHALFQFYVADGNLSCQLYQRSADIFLGVPFNIASYALLTMMMAQVCGLEAGEFVHTFGDAHLYRNHFEQAALQLEREPRALPVMKINPEVKDLFAFKFEDFELEGYDPHPHIKAVVSV.

Arginine 21 contributes to the dUMP binding site. (6R)-5,10-methylene-5,6,7,8-tetrahydrofolate is bound at residue histidine 51. Arginine 127 to arginine 128 contacts dUMP. The Nucleophile role is filled by cysteine 147. DUMP is bound by residues arginine 167–aspartate 170, asparagine 178, and histidine 208–tyrosine 210. Aspartate 170 lines the (6R)-5,10-methylene-5,6,7,8-tetrahydrofolate pocket. Serine 264 contacts (6R)-5,10-methylene-5,6,7,8-tetrahydrofolate.

Belongs to the thymidylate synthase family. Bacterial-type ThyA subfamily. In terms of assembly, homodimer.

The protein localises to the cytoplasm. It carries out the reaction dUMP + (6R)-5,10-methylene-5,6,7,8-tetrahydrofolate = 7,8-dihydrofolate + dTMP. It functions in the pathway pyrimidine metabolism; dTTP biosynthesis. Catalyzes the reductive methylation of 2'-deoxyuridine-5'-monophosphate (dUMP) to 2'-deoxythymidine-5'-monophosphate (dTMP) while utilizing 5,10-methylenetetrahydrofolate (mTHF) as the methyl donor and reductant in the reaction, yielding dihydrofolate (DHF) as a by-product. This enzymatic reaction provides an intracellular de novo source of dTMP, an essential precursor for DNA biosynthesis. This Neisseria gonorrhoeae protein is Thymidylate synthase.